The sequence spans 100 residues: Ribosomal biogenesis factor (100 aa).

Residue Ser19 is modified to Phosphoserine. N6-acetyllysine is present on Lys21. Ser69 carries the post-translational modification Phosphoserine.

As to quaternary structure, associates with the pre-60S ribosomal particles.

It is found in the nucleus. The protein resides in the nucleolus. Trans-acting factor in ribosome biogenesis required for efficient 40S and 60S subunit production. In Bos taurus (Bovine), this protein is Ribosomal biogenesis factor (RBIS).